Consider the following 92-residue polypeptide: Small ribosomal subunit protein uS19 (92 aa).

This sequence belongs to the universal ribosomal protein uS19 family.

In terms of biological role, protein S19 forms a complex with S13 that binds strongly to the 16S ribosomal RNA. This is Small ribosomal subunit protein uS19 from Klebsiella pneumoniae (strain 342).